A 442-amino-acid polypeptide reads, in one-letter code: Zuotin (442 aa).

Residues 49–84 (RQRHGRTFSEDERLEVKNKVQEEVKEESEDEEEDPA) are disordered. Phosphothreonine is present on threonine 55. Residues 55–71 (TFSEDERLEVKNKVQEE) show a composition bias toward basic and acidic residues. 2 positions are modified to phosphoserine: serine 57 and serine 76. The segment covering 72-83 (VKEESEDEEEDP) has biased composition (acidic residues). In terms of domain architecture, J spans 97–167 (DHYAVLGLSK…VRRRQFDSVD (71 aa)). Disordered stretches follow at residues 242–270 (DGES…DNAR) and 306–331 (GARE…EAAA). Basic and acidic residues predominate over residues 316 to 330 (KKKEEEERRAAEEAA).

RAC is a heterodimer of the Hsp70/DnaK-type chaperone ssz1 and the Hsp40/DnaJ-type chaperone zuo1. RAC associates with ribosomes via zuo1.

It is found in the cytoplasm. In terms of biological role, component of the ribosome-associated complex (RAC), a heterodimeric chaperone complex involved in regulation of accurate translation termination and in folding or maintaining nascent polypeptides in a folding-competent state. RAC stimulates the ATPase activity of the ribosome-associated pool of Hsp70-type chaperones SSB1/SSB2 that bind to the nascent polypeptide chain. This Schizosaccharomyces pombe (strain 972 / ATCC 24843) (Fission yeast) protein is Zuotin (zuo1).